The primary structure comprises 361 residues: Methyltransferase LUC1 (361 aa).

Tyr-18, Asn-66, Asp-89, Ser-126, and Phe-127 together coordinate S-adenosyl-L-homocysteine. Mg(2+) is bound by residues Gln-156 and Phe-233.

The protein belongs to the methyltransferase superfamily. Type-7 methyltransferase family. Mg(2+) is required as a cofactor.

Its pathway is mycotoxin biosynthesis. In terms of biological role, methyltransferase; part of the gene cluster that mediates the biosynthesis of the mycotoxin lucilactaene and the lucilactaene-related compound NG-391 that act as cell cycle inhibitors with potent growth inhibitory activity against malarial parasites, moderate growth inhibitory activity against cancer cells, and no activity against bacteria and fungi. LUC1 performs the last step of the pathway and methylates the hydroxyl group of demethyllucilactaene at C-21 to yeald lucilactaene. The pathway begins with the hybrid PKS-NRPS synthetase LUC5 which is responsible for the condensation of one acetyl-coenzyme A (CoA) unit with six malonyl-CoA units and the amide linkage of the arising heptaketide and homoserine, subsequently releasing the first intermediate prelucilactaene B. Both the cytochrome P450 monooxygenase LUC2 and the hydrolase LUC6 function in parallel in modification of prelucilactaene B. LUC6 may catalyze the 2-pyrrolidone ring formation to form prelucilactaene C from prelucilactaene B, followed by C-15 hydroxylation by the same enzyme to give prelucilactaene D, which is then converted to prelucilactaene E by epoxidation, and finally to prelucilactaene F by cyclization. Prelucilactane D, prelucilactaene E, and prelucilactaene F can be converted to dihydrolucilactaene, NG391, and lucilactaene, respectively, via C-20 methyl group hydroxylation by the cytochrome P450 monooxygenase LUC2. However, LUC2, unlike FUS8 in fusarin C biosynthesis, is not enough for the full oxidation of the C-20 methyl group into carboxylic acid, which is a prerequisite for the final methylation step. The aldehyde dehydrogenase LUC3 is involved in the biosynthesis by further oxidation of the C-20 alcoholic analog prelucilactaene G into a carboxylic derivative. This unidentified carboxylic derivative may be converted to demethyllucilactaene. As the last step, the methyltransferase LUC1 methylates the hydroxyl group at C-21 of demethyllucilactaene to generate lucilactaene. The protein is Methyltransferase LUC1 of Fusarium sp.